Consider the following 318-residue polypeptide: Aspartate carbamoyltransferase catalytic subunit (318 aa).

Carbamoyl phosphate-binding residues include Arg67 and Thr68. Residue Lys95 participates in L-aspartate binding. Carbamoyl phosphate contacts are provided by Arg117, His145, and Gln148. Arg178 and Arg236 together coordinate L-aspartate. Carbamoyl phosphate contacts are provided by Gly277 and Pro278.

It belongs to the aspartate/ornithine carbamoyltransferase superfamily. ATCase family. As to quaternary structure, heterododecamer (2C3:3R2) of six catalytic PyrB chains organized as two trimers (C3), and six regulatory PyrI chains organized as three dimers (R2).

It catalyses the reaction carbamoyl phosphate + L-aspartate = N-carbamoyl-L-aspartate + phosphate + H(+). Its pathway is pyrimidine metabolism; UMP biosynthesis via de novo pathway; (S)-dihydroorotate from bicarbonate: step 2/3. In terms of biological role, catalyzes the condensation of carbamoyl phosphate and aspartate to form carbamoyl aspartate and inorganic phosphate, the committed step in the de novo pyrimidine nucleotide biosynthesis pathway. This Roseiflexus castenholzii (strain DSM 13941 / HLO8) protein is Aspartate carbamoyltransferase catalytic subunit.